The chain runs to 591 residues: CDK5RAP3 protein homolog (591 aa).

Residues 232–250 show a composition bias toward low complexity; it reads RAGAPSSAKGPASSASAPP. 2 disordered regions span residues 232-252 and 269-303; these read RAGA…PPAL and TAPP…DAGG. Residues 279-303 show a composition bias toward gly residues; it reads AGAGASGQGGGIEIDWGDSGGDAGG. Short sequence motifs (shuffled ATG8-binding motif) lie at residues 311-314, 334-337, and 369-372; these read IDWD and INWD. Over residues 386–401 the composition is skewed to low complexity; sequence NNRAGDVAEGEAAASL. The tract at residues 386–416 is disordered; the sequence is NNRAGDVAEGEAAASLSGGGGGGASSGDPDD.

The protein belongs to the CDK5RAP3 family. In terms of assembly, substrate adapter component of the UFM1 ribosome E3 ligase (UREL) complex. Interacts with ATG8 family proteins.

In terms of biological role, substrate adapter of E3 ligase complexes mediating ufmylation, the covalent attachment of the ubiquitin-like modifier UFM1 to substrate proteins, and which is involved in various processes, such as ribosome recycling and reticulophagy (also called ER-phagy). In Chlamydomonas reinhardtii (Chlamydomonas smithii), this protein is CDK5RAP3 protein homolog.